The following is a 195-amino-acid chain: Protein Fer3 (195 aa).

Disordered regions lie at residues 1-24 and 56-82; these read MQHPHPIDQPTYMPDVPFQPLWGQ and PLVPQRPSTNGRANGSSSSSKKTRRRV. Over residues 63–75 the composition is skewed to low complexity; that stretch reads STNGRANGSSSSS. Residues 86–138 enclose the bHLH domain; that stretch reads AQRRAANIRERRRMFNLNEAFDKLRRKVPTFAYEKRLSRIETLRLAITYIGFM. The segment at 145 to 175 is disordered; it reads TPSNSHKSRSDVYGSMNGHHQAPPPAIHPHH.

Its subcellular location is the nucleus. In terms of biological role, transcription factor that binds to the E-box and functions as inhibitor of transcription. DNA binding requires dimerization with an E protein. Inhibits transcription activation by ASCL1/MASH1 by sequestering E proteins. The protein is Protein Fer3 (fer3) of Drosophila melanogaster (Fruit fly).